We begin with the raw amino-acid sequence, 110 residues long: Flagellar hook-basal body complex protein FliE (110 aa).

The protein belongs to the FliE family.

The protein resides in the bacterial flagellum basal body. The polypeptide is Flagellar hook-basal body complex protein FliE (Pseudomonas putida (strain W619)).